Consider the following 611-residue polypeptide: Acetylcholinesterase (611 aa).

The first 31 residues, 1–31 (MRPPWCPLYTPSLAAPILLLLLFLLGGGAEA), serve as a signal peptide directing secretion. A disulfide bond links Cys97 and Cys124. Ser231 serves as the catalytic Acyl-ester intermediate. A disulfide bridge connects residues Cys285 and Cys300. N-linked (GlcNAc...) asparagine glycosylation is present at Asn293. Glu362 functions as the Charge relay system in the catalytic mechanism. N-linked (GlcNAc...) asparagine glycosylation occurs at Asn378. Cys437 and Cys557 are joined by a disulfide. The Charge relay system role is filled by His475. N-linked (GlcNAc...) asparagine glycosylation occurs at Asn492.

Belongs to the type-B carboxylesterase/lipase family. Interacts with PRIMA1. The interaction with PRIMA1 is required to anchor it to the basal lamina of cells and organize into tetramers. Isoform H generates GPI-anchored dimers; disulfide linked. Isoform T generates multiple structures, ranging from monomers and dimers to collagen-tailed and hydrophobic-tailed forms, in which catalytic tetramers are associated with anchoring proteins that attach them to the basal lamina or to cell membranes. In the collagen-tailed forms, isoform T subunits are associated with a specific collagen, COLQ, which triggers the formation of isoform T tetramers, from monomers and dimers.

Its subcellular location is the synapse. It is found in the secreted. The protein localises to the cell membrane. It catalyses the reaction acetylcholine + H2O = choline + acetate + H(+). Its function is as follows. Terminates signal transduction at the neuromuscular junction by rapid hydrolysis of the acetylcholine released into the synaptic cleft. This is Acetylcholinesterase (ACHE) from Felis catus (Cat).